Consider the following 311-residue polypeptide: Protease HtpX homolog 1 (311 aa).

Transmembrane regions (helical) follow at residues 12–32 (IIAL…IINF) and 35–55 (FPVI…WLIS). A Zn(2+)-binding site is contributed by histidine 137. Residue glutamate 138 is part of the active site. Histidine 141 is a Zn(2+) binding site. 2 helical membrane passes run 159 to 179 (ILGF…IFAV) and 184 to 204 (ILVG…TFFL). Residue glutamate 216 participates in Zn(2+) binding.

Belongs to the peptidase M48B family. It depends on Zn(2+) as a cofactor.

It localises to the cell membrane. This is Protease HtpX homolog 1 from Sulfurisphaera tokodaii (strain DSM 16993 / JCM 10545 / NBRC 100140 / 7) (Sulfolobus tokodaii).